A 355-amino-acid polypeptide reads, in one-letter code: Molybdenum import ATP-binding protein ModC (355 aa).

In terms of domain architecture, ABC transporter spans 1 to 233 (MTLIVEAKQR…PSAAADRKEA (233 aa)). 31–38 (GRSGSGKT) provides a ligand contact to ATP. One can recognise a Mop domain in the interval 291–355 (GLSALNILEG…AIIKTVALEG (65 aa)).

This sequence belongs to the ABC transporter superfamily. Molybdate importer (TC 3.A.1.8) family. In terms of assembly, the complex is composed of two ATP-binding proteins (ModC), two transmembrane proteins (ModB) and a solute-binding protein (ModA).

The protein localises to the cell inner membrane. The enzyme catalyses molybdate(out) + ATP + H2O = molybdate(in) + ADP + phosphate + H(+). Functionally, part of the ABC transporter complex ModABC involved in molybdenum import. Responsible for energy coupling to the transport system. This is Molybdenum import ATP-binding protein ModC from Rhizobium etli (strain ATCC 51251 / DSM 11541 / JCM 21823 / NBRC 15573 / CFN 42).